The primary structure comprises 339 residues: Cyclin-D1-1 (339 aa).

This sequence belongs to the cyclin family. Cyclin D subfamily. As to quaternary structure, interacts with CDKA-1 and KRP6/ICK4. In terms of tissue distribution, expressed in roots, leaves and flowers.

Functionally, may activate cell cycle in the root apical meristem (RAM) and promote embryonic root (radicle) protrusion. In Arabidopsis thaliana (Mouse-ear cress), this protein is Cyclin-D1-1 (CYCD1-1).